A 65-amino-acid polypeptide reads, in one-letter code: SPbeta prophage-derived uncharacterized protein YorO (65 aa).

This chain is SPbeta prophage-derived uncharacterized protein YorO (yorO), found in Bacillus subtilis (strain 168).